Consider the following 254-residue polypeptide: Cell wall biogenesis protein NCW2 (254 aa).

The N-terminal stretch at 1–17 (MKACSILFTTLITLAAA) is a signal peptide. Disordered regions lie at residues 19 to 57 (KDSGSLDGQNSEDSSQKESSNSQEITPTTTKEAQESAST), 111 to 143 (TSTASVQPTGETSSGITNSASSSTTSTSTDGPV), and 167 to 191 (ATTDNTASSSKSSSGSSSKPESSTK). Residues 27 to 42 (QNSEDSSQKESSNSQE) are compositionally biased toward low complexity. Over residues 43–57 (ITPTTTKEAQESAST) the composition is skewed to polar residues. Low complexity predominate over residues 111-139 (TSTASVQPTGETSSGITNSASSSTTSTST). Asn-229 carries an N-linked (GlcNAc...) asparagine glycan. The GPI-anchor amidated asparagine moiety is linked to residue Asn-232. The propeptide at 233 to 254 (GAFAGTHIAYGAGAFAVGALLL) is removed in mature form.

Its subcellular location is the cell membrane. Cell wall biogenesis protein that participates in the organization of the beta-glucan assembly. Involved in the mechanism responsible for cell tolerance to polyhexamethylene biguanide (PHMB), an antifungal agent. This Saccharomyces cerevisiae (strain ATCC 204508 / S288c) (Baker's yeast) protein is Cell wall biogenesis protein NCW2.